The primary structure comprises 101 residues: Translation initiation factor IF-1, chloroplastic (101 aa).

Residues 1 to 10 (MNQLKKSFSP) show a composition bias toward polar residues. The interval 1-35 (MNQLKKSFSPTEGKKDQNNLINDPQKNKQKKQKKL) is disordered. The region spanning 26 to 101 (KNKQKKQKKL…TKGRITYRHR (76 aa)) is the S1-like domain.

This sequence belongs to the IF-1 family. As to quaternary structure, component of the 30S ribosomal translation pre-initiation complex which assembles on the 30S ribosome in the order IF-2 and IF-3, IF-1 and N-formylmethionyl-tRNA(fMet); mRNA recruitment can occur at any time during PIC assembly.

Its subcellular location is the plastid. It localises to the chloroplast. One of the essential components for the initiation of protein synthesis. Stabilizes the binding of IF-2 and IF-3 on the 30S subunit to which N-formylmethionyl-tRNA(fMet) subsequently binds. Helps modulate mRNA selection, yielding the 30S pre-initiation complex (PIC). Upon addition of the 50S ribosomal subunit IF-1, IF-2 and IF-3 are released leaving the mature 70S translation initiation complex. The polypeptide is Translation initiation factor IF-1, chloroplastic (Tetradesmus obliquus (Green alga)).